A 131-amino-acid polypeptide reads, in one-letter code: Proteinase inhibitor (131 aa).

The first 26 residues, 1–26 (MSASAKLSRMVCLLCGFFSTGISMAS), serve as a signal peptide directing secretion. Cys-51 and Cys-74 are joined by a disulfide.

This sequence belongs to the protease inhibitor I38 family.

The protein localises to the periplasm. In terms of biological role, inhibitor of the alkaline protease. It forms a non-covalent bond with the protease and may prevent its autocatalytic cleavage in the periplasm. The chain is Proteinase inhibitor (inh) from Pseudomonas aeruginosa (strain ATCC 15692 / DSM 22644 / CIP 104116 / JCM 14847 / LMG 12228 / 1C / PRS 101 / PAO1).